We begin with the raw amino-acid sequence, 235 residues long: Sugar fermentation stimulation protein homolog (235 aa).

Belongs to the SfsA family.

In Aliivibrio fischeri (strain MJ11) (Vibrio fischeri), this protein is Sugar fermentation stimulation protein homolog.